The following is a 500-amino-acid chain: MSISLYFLLLLPLFLIFFKKLSPSKGKLPPGPLGLPIIGNLHQLGKSLHRSFHKLSQNYGPVMFLHFGVVPVVVVSTREAAEEVLKTHDLETCTRPKLTATKLFSYNYKDIGFAQYGDDWREMRKLAMLELFSSKKLKAFRYIREEESEVLVNKLSKSAETRTMVDLRKALFSYTASIVCRLAFGQNFHECDFVDMDKVEDLVLESETNLGSFAFTDFFPAGLGWVIDRISGQHSELHKAFARLSNFFQHVIDDHLKPGQSQDHSDIIGVMLDMINKESKVGSFQVTYDHLKGVMSDVFLAGVNAGAITMIWAMTELARHPRVMKKLQQEIREILGDNKEKITEQDLEKVHYLKLVIEETFRLHPPAPLLLPRETMSDLKIQGYNIPKNTMIEINTYSIGRDPNCWENPNDFNPERFIDSPVEYKGQHYELLPFGAGRRICPGMATGITIVELGLLNVLYFFDWSLPDGMKIEDIDMEEAGAFVVAKKVPLELIPTPHQW.

A helical transmembrane segment spans residues M1–L21. C441 contributes to the heme binding site.

The protein belongs to the cytochrome P450 family. The cofactor is heme.

It is found in the membrane. The sequence is that of Cytochrome P450 71B22 (CYP71B22) from Arabidopsis thaliana (Mouse-ear cress).